We begin with the raw amino-acid sequence, 117 residues long: MELDQDVNRIIKSKTATKVSAMQAEIEANHAYIYDVQLKKLLRLHDEELQERCHTPLRKLYAKYSSRAEGNRDLQTWAEHVERDLRLLETTLRLVREGKAQDTEQAPGKGDRIFRSD.

A disordered region spans residues 97–117 (EGKAQDTEQAPGKGDRIFRSD).

It belongs to the BLOC1S1 family. In terms of assembly, component of the biogenesis of lysosome-related organelles complex-1 (BLOC-1).

It is found in the endosome. In terms of biological role, component of the biogenesis of lysosome-related organelles complex-1 (BLOC-1), a complex involved in endosomal cargo sorting. This is Biogenesis of lysosome-related organelles complex 1 subunit BLS1 (BLS1) from Eremothecium gossypii (strain ATCC 10895 / CBS 109.51 / FGSC 9923 / NRRL Y-1056) (Yeast).